Here is a 786-residue protein sequence, read N- to C-terminus: Tyrosine-protein kinase Btk (786 aa).

The disordered stretch occupies residues 1-23; that stretch reads MMGTKHRNSHVNGSIKSSSSLRS. Over residues 14-23 the composition is skewed to low complexity; that stretch reads SIKSSSSLRS. The region spanning 41 to 184 is the PH domain; it reads DVVKSGSMVK…WIRAIRQVCE (144 aa). A Btk-type zinc finger spans residues 187-223; it reads NTPKSYRYHPGLWSGKKWSCCKGLSRTTFGCRAAAHW. Residues histidine 195, cysteine 206, cysteine 207, and cysteine 217 each contribute to the Zn(2+) site. Low complexity predominate over residues 226–240; it reads ANNNPSNGSSPAQNS. Residues 226–301 form a disordered region; sequence ANNNPSNGSS…TPTSLQPQSS (76 aa). The span at 241–260 shows a compositional bias: polar residues; sequence TRSISPNSSTTNSQFSLQHN. Gly residues predominate over residues 264–290; that stretch reads SLGGGVGGGLGGGGSLGLGGGGGGGGS. The segment covering 291–301 has biased composition (polar residues); the sequence is CTPTSLQPQSS. The SH3 domain occupies 342–402; sequence HFVKLVVALY…PSNYVKPKAL (61 aa). Positions 410 to 503 constitute an SH2 domain; the sequence is WYVGDMSRQR…GLACRLKSSP (94 aa). A Protein kinase domain is found at 526-779; sequence LMLMEELGSG…FRVLMDQLAL (254 aa). Residues 532–540 and lysine 554 each bind ATP; that span reads LGSGQFGVV. Aspartate 647 (proton acceptor) is an active-site residue. A Phosphotyrosine; by autocatalysis modification is found at tyrosine 677.

It belongs to the protein kinase superfamily. Tyr protein kinase family. TEC subfamily. It depends on Zn(2+) as a cofactor. Ring canals in the egg chambers and imaginal disks of third-instar larvae.

The enzyme catalyses L-tyrosyl-[protein] + ATP = O-phospho-L-tyrosyl-[protein] + ADP + H(+). Its function is as follows. Required for proper ring canal development. Also required for the development of male genitalia and for adult survival. The protein is Tyrosine-protein kinase Btk of Drosophila melanogaster (Fruit fly).